A 333-amino-acid polypeptide reads, in one-letter code: MKSRLHPDIEKAYAVLDTGEPLSLELASALGRLPDSEVLDLVSLANRVKARHAANHGAIHACSIMNAKSGVCGENCRFCAQSKHNSAEVDVYELVDENKVLEQARSAWEQGIGHFGIVTSGYGYLKVTPEFERILGMIDRLHRELPGLHVCASLGVLGDAPAAELARHGIAHYNINIQVDPARYGELIADTHAVNERIGTIRRLRSNGIGVCCGGILGVGETMQERIGMIFALRDLDVTVIPLNVLVPIDGTPLEGAAPVSVPEIAKTFAICRLAHPTKIIKFAAGRETVMKDFQGLLMLAGADGFLTGGYLTTRGRDISTDRQLARQLSKFS.

Residues 54–287 (ANHGAIHACS…TKIIKFAAGR (234 aa)) form the Radical SAM core domain. [4Fe-4S] cluster is bound by residues Cys72, Cys76, and Cys79. The [2Fe-2S] cluster site is built by Cys151, Cys212, and Lys282.

The protein belongs to the radical SAM superfamily. Biotin synthase family. In terms of assembly, homodimer. Requires [4Fe-4S] cluster as cofactor. [2Fe-2S] cluster serves as cofactor.

It carries out the reaction (4R,5S)-dethiobiotin + (sulfur carrier)-SH + 2 reduced [2Fe-2S]-[ferredoxin] + 2 S-adenosyl-L-methionine = (sulfur carrier)-H + biotin + 2 5'-deoxyadenosine + 2 L-methionine + 2 oxidized [2Fe-2S]-[ferredoxin]. It participates in cofactor biosynthesis; biotin biosynthesis; biotin from 7,8-diaminononanoate: step 2/2. Functionally, catalyzes the conversion of dethiobiotin (DTB) to biotin by the insertion of a sulfur atom into dethiobiotin via a radical-based mechanism. This Chlorobaculum tepidum (strain ATCC 49652 / DSM 12025 / NBRC 103806 / TLS) (Chlorobium tepidum) protein is Biotin synthase.